The following is a 48-amino-acid chain: Large ribosomal subunit protein eL40 (48 aa).

The protein belongs to the eukaryotic ribosomal protein eL40 family.

This Methanocella arvoryzae (strain DSM 22066 / NBRC 105507 / MRE50) protein is Large ribosomal subunit protein eL40.